The primary structure comprises 344 residues: Small ribosomal subunit protein bS1m (344 aa).

At S327 the chain carries Phosphoserine.

This sequence belongs to the bacterial ribosomal protein bS1 family. As to quaternary structure, component of the mitochondrial small ribosomal subunit (mt-SSU). Mature yeast 74S mitochondrial ribosomes consist of a small (37S) and a large (54S) subunit. The 37S small subunit contains a 15S ribosomal RNA (15S mt-rRNA) and 34 different proteins. The 54S large subunit contains a 21S rRNA (21S mt-rRNA) and 46 different proteins.

The protein resides in the mitochondrion. In terms of biological role, component of the mitochondrial ribosome (mitoribosome), a dedicated translation machinery responsible for the synthesis of mitochondrial genome-encoded proteins, including at least some of the essential transmembrane subunits of the mitochondrial respiratory chain. The mitoribosomes are attached to the mitochondrial inner membrane and translation products are cotranslationally integrated into the membrane. bS1m functionally interacts with the 5'-UTR of mitochondrial mRNAs. This chain is Small ribosomal subunit protein bS1m (MRP51), found in Saccharomyces cerevisiae (strain ATCC 204508 / S288c) (Baker's yeast).